Reading from the N-terminus, the 582-residue chain is MSLKGKFFAFLPNPNTSSNKFFKSILEKKGATIVSSIQNCLQSSRKEVVILIEDSFVDSDMHLTQKDIFQREAGLNDVDEFLGKIEQSGIQCVKTSCITKWVQNDKFAFQKDDLIKFQPSIIVISDNADDGQSSTDKESEISTDVESERNDDSNNKDMIQASKPLKRLLQGDKGRASLVTDKTKYKNNELIIGALKRLTKKYEIEGEKFRARSYRLAKQSMENCDFNVRSGEEAHTKLRNIGPSIAKKIQVILDTGVLPGLNDSVGLEDKLKYFKNCYGIGSEIAKRWNLLNFESFCVAAKKDPEEFVSDWTILFGWSYYDDWLCKMSRNECFTHLKKVQKALRGIDPECQVELQGSYNRGYSKCGDIDLLFFKPFCNDTTELAKIMETLCIKLYKDGYIHCFLQLTPNLEKLFLKRIVERFRTAKIVGYGERKRWYSSEIIKKFFMGVKLSPRELEELKEMKNDEGTLLIEEEEEEETKLKPIDQYMSLNAKDGNYCRRLDFFCCKWDELGAGRIHYTGSKEYNRWIRILAAQKGFKLTQHGLFRNNILLESFNERRIFELLNLKYAEPEHRNIEWEKKTA.

The disordered stretch occupies residues 127-161 (NADDGQSSTDKESEISTDVESERNDDSNNKDMIQA). A compositionally biased stretch (basic and acidic residues) spans 135–155 (TDKESEISTDVESERNDDSNN). Positions 360–369 (RGYSKCGDID) are involved in ssDNA binding. Residues Asp-367, Asp-369, and Asp-502 each coordinate Mg(2+).

It belongs to the DNA polymerase type-X family. As to quaternary structure, interacts with DNL4 subunit of the DNL4-LIF1 complex. Mg(2+) serves as cofactor.

The protein resides in the nucleus. The catalysed reaction is DNA(n) + a 2'-deoxyribonucleoside 5'-triphosphate = DNA(n+1) + diphosphate. Its activity is regulated as follows. Stimulated by the interaction with the DNL4-LIF1 complex. Its function is as follows. Repair polymerase. Involved in gap-filling in DNA nonhomologous end joining (NHEJ) required for double-strand break repair. Seems to conduct DNA synthesis in a stepwise distributive fashion rather than in a processive fashion as for other DNA polymerases. Preferentially acts upon short gaps formed by the alignment of linear duplexes with complementary single-strand ends. Required for filling gaps that need removal of a 5'- or 3'-terminal mismatch, however lacks nuclease activities. This chain is DNA polymerase IV (POL4), found in Saccharomyces cerevisiae (strain ATCC 204508 / S288c) (Baker's yeast).